A 205-amino-acid polypeptide reads, in one-letter code: uncharacterized protein (205 aa).

The GST N-terminal domain maps to Met1–Ala82. Glutathione-binding positions include Val53 and Glu66–Thr67. Positions Gly86 to Ile205 constitute a GST C-terminal domain.

The protein belongs to the GST superfamily. Beta family.

This is an uncharacterized protein from Escherichia coli (strain K12).